A 320-amino-acid chain; its full sequence is Beta-ketoacyl-[acyl-carrier-protein] synthase III (320 aa).

Residues C113 and H247 contribute to the active site. The interval 248–252 (QANRR) is ACP-binding. Residue N277 is part of the active site.

This sequence belongs to the thiolase-like superfamily. FabH family. In terms of assembly, homodimer.

It localises to the cytoplasm. It carries out the reaction malonyl-[ACP] + acetyl-CoA + H(+) = 3-oxobutanoyl-[ACP] + CO2 + CoA. The protein operates within lipid metabolism; fatty acid biosynthesis. Its function is as follows. Catalyzes the condensation reaction of fatty acid synthesis by the addition to an acyl acceptor of two carbons from malonyl-ACP. Catalyzes the first condensation reaction which initiates fatty acid synthesis and may therefore play a role in governing the total rate of fatty acid production. Possesses both acetoacetyl-ACP synthase and acetyl transacylase activities. Its substrate specificity determines the biosynthesis of branched-chain and/or straight-chain of fatty acids. This Acidiphilium cryptum (strain JF-5) protein is Beta-ketoacyl-[acyl-carrier-protein] synthase III.